The sequence spans 306 residues: Glycine--tRNA ligase alpha subunit (306 aa).

The protein belongs to the class-II aminoacyl-tRNA synthetase family. Tetramer of two alpha and two beta subunits.

It is found in the cytoplasm. The catalysed reaction is tRNA(Gly) + glycine + ATP = glycyl-tRNA(Gly) + AMP + diphosphate. This Aliivibrio fischeri (strain ATCC 700601 / ES114) (Vibrio fischeri) protein is Glycine--tRNA ligase alpha subunit.